A 135-amino-acid chain; its full sequence is Transcription antitermination protein NusB (135 aa).

It belongs to the NusB family.

Involved in transcription antitermination. Required for transcription of ribosomal RNA (rRNA) genes. Binds specifically to the boxA antiterminator sequence of the ribosomal RNA (rrn) operons. This is Transcription antitermination protein NusB from Wolinella succinogenes (strain ATCC 29543 / DSM 1740 / CCUG 13145 / JCM 31913 / LMG 7466 / NCTC 11488 / FDC 602W) (Vibrio succinogenes).